A 232-amino-acid polypeptide reads, in one-letter code: 7-cyano-7-deazaguanine synthase 2 (232 aa).

9-19 (FSGGQDSTTCL) is an ATP binding site. Cysteine 189, cysteine 198, cysteine 201, and cysteine 204 together coordinate Zn(2+).

Belongs to the QueC family. It depends on Zn(2+) as a cofactor.

It carries out the reaction 7-carboxy-7-deazaguanine + NH4(+) + ATP = 7-cyano-7-deazaguanine + ADP + phosphate + H2O + H(+). Its pathway is purine metabolism; 7-cyano-7-deazaguanine biosynthesis. Catalyzes the ATP-dependent conversion of 7-carboxy-7-deazaguanine (CDG) to 7-cyano-7-deazaguanine (preQ(0)). This is 7-cyano-7-deazaguanine synthase 2 from Pseudomonas fluorescens (strain ATCC BAA-477 / NRRL B-23932 / Pf-5).